Consider the following 172-residue polypeptide: 3-hydroxydecanoyl-[acyl-carrier-protein] dehydratase (172 aa).

The active site involves H71.

It belongs to the thioester dehydratase family. FabA subfamily. As to quaternary structure, homodimer.

Its subcellular location is the cytoplasm. It carries out the reaction a (3R)-hydroxyacyl-[ACP] = a (2E)-enoyl-[ACP] + H2O. The catalysed reaction is (3R)-hydroxydecanoyl-[ACP] = (2E)-decenoyl-[ACP] + H2O. The enzyme catalyses (2E)-decenoyl-[ACP] = (3Z)-decenoyl-[ACP]. It functions in the pathway lipid metabolism; fatty acid biosynthesis. Necessary for the introduction of cis unsaturation into fatty acids. Catalyzes the dehydration of (3R)-3-hydroxydecanoyl-ACP to E-(2)-decenoyl-ACP and then its isomerization to Z-(3)-decenoyl-ACP. Can catalyze the dehydratase reaction for beta-hydroxyacyl-ACPs with saturated chain lengths up to 16:0, being most active on intermediate chain length. The sequence is that of 3-hydroxydecanoyl-[acyl-carrier-protein] dehydratase from Salmonella agona (strain SL483).